Here is a 197-residue protein sequence, read N- to C-terminus: 3-isopropylmalate dehydratase small subunit (197 aa).

Belongs to the LeuD family. LeuD type 1 subfamily. As to quaternary structure, heterodimer of LeuC and LeuD.

It carries out the reaction (2R,3S)-3-isopropylmalate = (2S)-2-isopropylmalate. It functions in the pathway amino-acid biosynthesis; L-leucine biosynthesis; L-leucine from 3-methyl-2-oxobutanoate: step 2/4. Functionally, catalyzes the isomerization between 2-isopropylmalate and 3-isopropylmalate, via the formation of 2-isopropylmaleate. This Corynebacterium glutamicum (strain ATCC 13032 / DSM 20300 / JCM 1318 / BCRC 11384 / CCUG 27702 / LMG 3730 / NBRC 12168 / NCIMB 10025 / NRRL B-2784 / 534) protein is 3-isopropylmalate dehydratase small subunit.